We begin with the raw amino-acid sequence, 205 residues long: Holliday junction branch migration complex subunit RuvA (205 aa).

The domain I stretch occupies residues 1–65 (MIGRLRGAVA…SAGLRLYGFL (65 aa)). Positions 66–144 (TREDRRAFVL…TDGPVLMSAP (79 aa)) are domain II. A flexible linker region spans residues 145–153 (TSSAPSAPA). Positions 153-205 (AKPAPTGDAVAALMGLGVAEVNARRVVEAAAAELGEEATVQALIKAGLKELGR) are domain III.

Belongs to the RuvA family. In terms of assembly, homotetramer. Forms an RuvA(8)-RuvB(12)-Holliday junction (HJ) complex. HJ DNA is sandwiched between 2 RuvA tetramers; dsDNA enters through RuvA and exits via RuvB. An RuvB hexamer assembles on each DNA strand where it exits the tetramer. Each RuvB hexamer is contacted by two RuvA subunits (via domain III) on 2 adjacent RuvB subunits; this complex drives branch migration. In the full resolvosome a probable DNA-RuvA(4)-RuvB(12)-RuvC(2) complex forms which resolves the HJ.

It is found in the cytoplasm. Functionally, the RuvA-RuvB-RuvC complex processes Holliday junction (HJ) DNA during genetic recombination and DNA repair, while the RuvA-RuvB complex plays an important role in the rescue of blocked DNA replication forks via replication fork reversal (RFR). RuvA specifically binds to HJ cruciform DNA, conferring on it an open structure. The RuvB hexamer acts as an ATP-dependent pump, pulling dsDNA into and through the RuvAB complex. HJ branch migration allows RuvC to scan DNA until it finds its consensus sequence, where it cleaves and resolves the cruciform DNA. This Caulobacter vibrioides (strain ATCC 19089 / CIP 103742 / CB 15) (Caulobacter crescentus) protein is Holliday junction branch migration complex subunit RuvA.